The sequence spans 872 residues: MKSSAIRQSFLDFFASKGHTVVPSSSLVPGNDPTLLFTNAGMVQFKDVFTGQDTRPYSRAVSSQRCVRAGGKHNDLENVGYTARHHTFFEMLGNFSFGDYFKQDAIKYAWEYLTTVLKLPSEKLWVTVYAEDDEAYDIWHNDVGVPKARIVRIGDNKGARYASDNFWAMGDTGPCGPCTEIFYDHGPDVAGGPPGSPDEDGDRYIEIWNNVFMQFNRDEAGTMHPLPKPSVDTGMGLERISAVMQHVHSNYEIDLFQALIAAAARETNTHDLGNNSLKVIADHIRACSFLIVDGVIPGNEGRGYVLRRIIRRAIRHGYKLGARAAFFHRIVPDLGIAMGEAYPELVKAQTRVMDILRQEEERFFETIEHGMGILESELKKLVAGGVFDGELAFKLHDTYGFPLDLTADICREAGVAVDTAAFDAAMARQKAQARGAGKFKLGAGLDYAGEATTFHGYDTLAREASVLALYKDGSAVGELKEGDSGVVVLDHTPFYAESGGQVGDRGTLQSKQGAFEVEDTLKIQAQVFGHHGVVKTGSLAVGDSVLARVDETARARTMRNHSVTHLMHKALREVLGEHVQQKGSLVDSEKTRFDFVQPSPMTAAQIREVEARVNAEILVNTPTQARVMGIEDAQKTGAMMLFGEKYGDEVRVLDIGSSRELCGGTHVARTGDIGLFKIVSESGVAAGVRRVEAITGDNALAYLQAREQEIQQAAAALKAHPAELGAKLAQTLDHVRALEKDLERLKSKLAASAGDELVAQAADINGVKVLAARLDGIDAKGLRETADKLRDKLKSCALVLGTVADGKVSLIAAVTPDVTAKIKAGELVNVVAAQVGGKGGGKPDLAMAGGTDPGALPAALASVEAWVQSRLS.

The Zn(2+) site is built by His561, His565, Cys662, and His666.

It belongs to the class-II aminoacyl-tRNA synthetase family. The cofactor is Zn(2+).

It is found in the cytoplasm. The catalysed reaction is tRNA(Ala) + L-alanine + ATP = L-alanyl-tRNA(Ala) + AMP + diphosphate. In terms of biological role, catalyzes the attachment of alanine to tRNA(Ala) in a two-step reaction: alanine is first activated by ATP to form Ala-AMP and then transferred to the acceptor end of tRNA(Ala). Also edits incorrectly charged Ser-tRNA(Ala) and Gly-tRNA(Ala) via its editing domain. This chain is Alanine--tRNA ligase, found in Thiobacillus denitrificans (strain ATCC 25259 / T1).